Here is a 518-residue protein sequence, read N- to C-terminus: Glutamate--cysteine ligase (518 aa).

It belongs to the glutamate--cysteine ligase type 1 family. Type 1 subfamily.

The enzyme catalyses L-cysteine + L-glutamate + ATP = gamma-L-glutamyl-L-cysteine + ADP + phosphate + H(+). It functions in the pathway sulfur metabolism; glutathione biosynthesis; glutathione from L-cysteine and L-glutamate: step 1/2. The protein is Glutamate--cysteine ligase of Shigella boydii serotype 18 (strain CDC 3083-94 / BS512).